We begin with the raw amino-acid sequence, 145 residues long: SsrA-binding protein (145 aa).

It belongs to the SmpB family.

The protein localises to the cytoplasm. Its function is as follows. Required for rescue of stalled ribosomes mediated by trans-translation. Binds to transfer-messenger RNA (tmRNA), required for stable association of tmRNA with ribosomes. tmRNA and SmpB together mimic tRNA shape, replacing the anticodon stem-loop with SmpB. tmRNA is encoded by the ssrA gene; the 2 termini fold to resemble tRNA(Ala) and it encodes a 'tag peptide', a short internal open reading frame. During trans-translation Ala-aminoacylated tmRNA acts like a tRNA, entering the A-site of stalled ribosomes, displacing the stalled mRNA. The ribosome then switches to translate the ORF on the tmRNA; the nascent peptide is terminated with the 'tag peptide' encoded by the tmRNA and targeted for degradation. The ribosome is freed to recommence translation, which seems to be the essential function of trans-translation. In Mycoplasma genitalium (strain ATCC 33530 / DSM 19775 / NCTC 10195 / G37) (Mycoplasmoides genitalium), this protein is SsrA-binding protein.